The chain runs to 435 residues: GTPase Der (435 aa).

EngA-type G domains are found at residues 4-167 (GIVA…PSHE) and 175-350 (TRVS…TALD). Residues 10-17 (GRPNVGKS), 57-61 (DTGGI), 119-122 (NKYD), 181-188 (GRPNVGKS), 228-232 (DTAGI), and 293-296 (NKWD) each bind GTP. A KH-like domain is found at 351 to 435 (KKIKTSVFNE…PMSIIFRERK (85 aa)).

This sequence belongs to the TRAFAC class TrmE-Era-EngA-EngB-Septin-like GTPase superfamily. EngA (Der) GTPase family. As to quaternary structure, associates with the 50S ribosomal subunit.

In terms of biological role, GTPase that plays an essential role in the late steps of ribosome biogenesis. This chain is GTPase Der, found in Mesoplasma florum (strain ATCC 33453 / NBRC 100688 / NCTC 11704 / L1) (Acholeplasma florum).